A 776-amino-acid polypeptide reads, in one-letter code: FT-interacting protein 4 (776 aa).

Basic and acidic residues predominate over residues 1–16 (MQRPPPEDFSLKETKP). The segment at 1–23 (MQRPPPEDFSLKETKPHLGGGKV) is disordered. 3 C2 domains span residues 22-142 (KVTG…PQWY), 181-305 (VSGT…SRWF), and 346-474 (YSSD…THSY). Asp-55, Asp-61, Asp-108, Asp-110, and Asp-115 together coordinate Ca(2+). 3 helical membrane passes run 577–597 (IMGVLSGIIAVGKWFEQICVW), 608–628 (ILFIILVIYPELILPTIFLYL), and 719–739 (LFVLFCLIAAVILYITPFQVV).

This sequence belongs to the MCTP family. Interacts with and regulates subcellular localization and trafficking of STM. Ca(2+) is required as a cofactor. Highly expressed in both vegetative and inflorescence shoot apical meristems (SAMs). Accumulates in root meristems. Observed in flowers.

The protein resides in the endoplasmic reticulum membrane. It localises to the cytoplasm. Its subcellular location is the vesicle. It is found in the cell membrane. The protein localises to the endosome membrane. The protein resides in the golgi apparatus membrane. Functionally, required for proliferation and differentiation of shoot stem cells in the shoot apical meristem (SAM), thus determining the appropriate balance between the maintenance of shoot stem cells and their differentiation into other aboveground plant parts via the control of subcellular localization and intercellular trafficking of STM in the shoot apex. Prevents intracellular trafficking of STM to the plasma membrane in cells in the peripheral shoot meristem region thus facilitating STM recycling to the nucleus to maintain stem cells. May function as a signaling molecule by regulating the trafficking of other regulators. The polypeptide is FT-interacting protein 4 (Arabidopsis thaliana (Mouse-ear cress)).